The primary structure comprises 280 residues: RNA polymerase II holoenzyme cyclin-like subunit (280 aa).

Residues 23 to 150 (ERRKGLEDIF…LIEELGTYLV (128 aa)) form the Cyclin N-terminal domain.

The protein belongs to the cyclin family. Cyclin C subfamily. As to quaternary structure, component of the SRB8-11 complex, a regulatory module of the Mediator complex.

The protein resides in the nucleus. In terms of biological role, component of the SRB8-11 complex. The SRB8-11 complex is a regulatory module of the Mediator complex which is itself involved in regulation of basal and activated RNA polymerase II-dependent transcription. The SRB8-11 complex may be involved in the transcriptional repression of a subset of genes regulated by Mediator. It may inhibit the association of the Mediator complex with RNA polymerase II to form the holoenzyme complex. The SRB8-11 complex phosphorylates the C-terminal domain (CTD) of the largest subunit of RNA polymerase II. This is RNA polymerase II holoenzyme cyclin-like subunit (SSN8) from Yarrowia lipolytica (strain CLIB 122 / E 150) (Yeast).